The chain runs to 373 residues: D-amino-acid oxidase 3 (373 aa).

A signal peptide spans 1 to 19 (MVKYDAVILGSGVLGLSIA). FAD contacts are provided by Ser-11, Leu-14, Asp-35, Ala-46, Ser-47, Gly-51, and Asn-53. Phe-57 contributes to the anthranilate binding site. Residue Asn-180 is glycosylated (N-linked (GlcNAc...) asparagine). A disulfide bridge connects residues Cys-214 and Cys-271. Tyr-229, Tyr-246, and Arg-296 together coordinate anthranilate. Residues Tyr-229, Tyr-246, and Arg-296 each coordinate (R)-lactate. Residues Arg-296, Gly-342, Gly-345, Tyr-346, and Gln-347 each coordinate FAD. The short motif at 371-373 (AKL) is the Microbody targeting signal element.

This sequence belongs to the DAMOX/DASOX family. FAD serves as cofactor.

The protein resides in the peroxisome matrix. The enzyme catalyses a D-alpha-amino acid + O2 + H2O = a 2-oxocarboxylate + H2O2 + NH4(+). Catalyzes the oxidative deamination of D-amino acids with broad substrate specificity. Enables the organism to utilize D-amino acids as a source of nutrients. Enables the organism to utilize D-glutamate and D-methionine as a nitrogen source. Protects the organism from the toxicity of D-amino acids, including from D-glutamate. May play a role in its interaction with the host. This Cryptococcus neoformans var. grubii serotype A (strain H99 / ATCC 208821 / CBS 10515 / FGSC 9487) (Filobasidiella neoformans var. grubii) protein is D-amino-acid oxidase 3.